The sequence spans 344 residues: Holliday junction branch migration complex subunit RuvB (344 aa).

The interval 1-185 (MSTSRSDALK…FGIDFRYDYY (185 aa)) is large ATPase domain (RuvB-L). ATP contacts are provided by residues Leu-24, Arg-25, Gly-66, Lys-69, Thr-70, Thr-71, 132 to 134 (EDY), Arg-175, Tyr-185, and Arg-222. Thr-70 contacts Mg(2+). The interval 186–256 (TADLLQEITQ…IADRALNALD (71 aa)) is small ATPAse domain (RuvB-S). The segment at 259–344 (EEGLDDMDAR…AADQDLFDQE (86 aa)) is head domain (RuvB-H). DNA is bound by residues Arg-314 and Arg-319.

This sequence belongs to the RuvB family. Homohexamer. Forms an RuvA(8)-RuvB(12)-Holliday junction (HJ) complex. HJ DNA is sandwiched between 2 RuvA tetramers; dsDNA enters through RuvA and exits via RuvB. An RuvB hexamer assembles on each DNA strand where it exits the tetramer. Each RuvB hexamer is contacted by two RuvA subunits (via domain III) on 2 adjacent RuvB subunits; this complex drives branch migration. In the full resolvosome a probable DNA-RuvA(4)-RuvB(12)-RuvC(2) complex forms which resolves the HJ.

Its subcellular location is the cytoplasm. The catalysed reaction is ATP + H2O = ADP + phosphate + H(+). Functionally, the RuvA-RuvB-RuvC complex processes Holliday junction (HJ) DNA during genetic recombination and DNA repair, while the RuvA-RuvB complex plays an important role in the rescue of blocked DNA replication forks via replication fork reversal (RFR). RuvA specifically binds to HJ cruciform DNA, conferring on it an open structure. The RuvB hexamer acts as an ATP-dependent pump, pulling dsDNA into and through the RuvAB complex. RuvB forms 2 homohexamers on either side of HJ DNA bound by 1 or 2 RuvA tetramers; 4 subunits per hexamer contact DNA at a time. Coordinated motions by a converter formed by DNA-disengaged RuvB subunits stimulates ATP hydrolysis and nucleotide exchange. Immobilization of the converter enables RuvB to convert the ATP-contained energy into a lever motion, pulling 2 nucleotides of DNA out of the RuvA tetramer per ATP hydrolyzed, thus driving DNA branch migration. The RuvB motors rotate together with the DNA substrate, which together with the progressing nucleotide cycle form the mechanistic basis for DNA recombination by continuous HJ branch migration. Branch migration allows RuvC to scan DNA until it finds its consensus sequence, where it cleaves and resolves cruciform DNA. This chain is Holliday junction branch migration complex subunit RuvB, found in Salinibacter ruber (strain DSM 13855 / M31).